Reading from the N-terminus, the 267-residue chain is Orotidine 5'-phosphate decarboxylase (267 aa).

Residues Asp38, 60–62 (KTH), 92–101 (DRKFADIGNT), Tyr218, and Arg236 contribute to the substrate site. Residue Lys94 is the Proton donor of the active site.

This sequence belongs to the OMP decarboxylase family.

It carries out the reaction orotidine 5'-phosphate + H(+) = UMP + CO2. It functions in the pathway pyrimidine metabolism; UMP biosynthesis via de novo pathway; UMP from orotate: step 2/2. The sequence is that of Orotidine 5'-phosphate decarboxylase (URA3) from Debaryomyces hansenii (strain ATCC 36239 / CBS 767 / BCRC 21394 / JCM 1990 / NBRC 0083 / IGC 2968) (Yeast).